A 321-amino-acid chain; its full sequence is 5,10-methylenetetrahydromethanopterin reductase (321 aa).

It belongs to the mer family. As to quaternary structure, homotetramer.

Its subcellular location is the cytoplasm. The enzyme catalyses 5-methyl-5,6,7,8-tetrahydromethanopterin + oxidized coenzyme F420-(gamma-L-Glu)(n) + H(+) = 5,10-methylenetetrahydromethanopterin + reduced coenzyme F420-(gamma-L-Glu)(n). Its pathway is one-carbon metabolism; methanogenesis from CO(2); methyl-coenzyme M from 5,10-methylene-5,6,7,8-tetrahydromethanopterin: step 1/2. In terms of biological role, catalyzes the reversible reduction of methylene-H(4)MPT to methyl-H(4)MPT. The chain is 5,10-methylenetetrahydromethanopterin reductase from Methanothermobacter marburgensis (strain ATCC BAA-927 / DSM 2133 / JCM 14651 / NBRC 100331 / OCM 82 / Marburg) (Methanobacterium thermoautotrophicum).